The following is a 166-amino-acid chain: Large ribosomal subunit protein uL10 (166 aa).

This sequence belongs to the universal ribosomal protein uL10 family. As to quaternary structure, part of the ribosomal stalk of the 50S ribosomal subunit. The N-terminus interacts with L11 and the large rRNA to form the base of the stalk. The C-terminus forms an elongated spine to which L12 dimers bind in a sequential fashion forming a multimeric L10(L12)X complex.

In terms of biological role, forms part of the ribosomal stalk, playing a central role in the interaction of the ribosome with GTP-bound translation factors. This Streptococcus pneumoniae (strain 70585) protein is Large ribosomal subunit protein uL10.